Reading from the N-terminus, the 359-residue chain is Peptide chain release factor 1 (359 aa).

An N5-methylglutamine modification is found at Gln236.

This sequence belongs to the prokaryotic/mitochondrial release factor family. In terms of processing, methylated by PrmC. Methylation increases the termination efficiency of RF1.

It localises to the cytoplasm. Its function is as follows. Peptide chain release factor 1 directs the termination of translation in response to the peptide chain termination codons UAG and UAA. This Streptococcus pneumoniae serotype 4 (strain ATCC BAA-334 / TIGR4) protein is Peptide chain release factor 1.